Here is a 260-residue protein sequence, read N- to C-terminus: RxLR effector protein BLR38 (260 aa).

The N-terminal stretch at 1 to 18 (MHCTVFFLLIACAKSSYG) is a signal peptide. The short motif at 46–49 (RLLR) is the RxLR element. Residues 136–148 (MPSSRKRPRALDE) carry the Nuclear localuization signal (NLS) motif.

The protein belongs to the RxLR effector family.

It localises to the secreted. The protein resides in the host nucleus. Secreted effector that triggers a robust hypersensitive response (HR) in Lactuca serriola LS102. The response to BLN06 was visible as strong necrosis. Although effector recognition is frequently associated with single dominant R gene loci, the recognition of BLR38 requires 2 unlinked loci that display incomplete dominance. This Bremia lactucae (Lettuce downy mildew) protein is RxLR effector protein BLR38.